We begin with the raw amino-acid sequence, 126 residues long: Translation initiation factor 5A (126 aa).

Lys36 bears the Hypusine mark.

Belongs to the eIF-5A family.

The protein localises to the cytoplasm. In terms of biological role, functions by promoting the formation of the first peptide bond. In Haloarcula marismortui (strain ATCC 43049 / DSM 3752 / JCM 8966 / VKM B-1809) (Halobacterium marismortui), this protein is Translation initiation factor 5A.